We begin with the raw amino-acid sequence, 157 residues long: Probable succinate transporter subunit YjjB (157 aa).

The next 4 membrane-spanning stretches (helical) occupy residues 2 to 22, 55 to 75, 87 to 107, and 129 to 149; these read GIIS…IPAV, AGFN…SIGI, IFTV…TAMI, and FLKA…PGLW.

Belongs to the ThrE exporter (TC 2.A.79) family. In terms of assembly, the transporter is composed of YjjB and YjjP.

It localises to the cell inner membrane. Functionally, involved in succinate export with YjjP. Both proteins are required for export. This chain is Probable succinate transporter subunit YjjB, found in Klebsiella pneumoniae subsp. pneumoniae (strain ATCC 700721 / MGH 78578).